The following is a 77-amino-acid chain: Acyl carrier protein (77 aa).

The 76-residue stretch at 2–77 (SSIEERVNKI…SAVDYIKAHS (76 aa)) folds into the Carrier domain. Residue Ser-37 is modified to O-(pantetheine 4'-phosphoryl)serine.

The protein belongs to the acyl carrier protein (ACP) family. 4'-phosphopantetheine is transferred from CoA to a specific serine of apo-ACP by AcpS. This modification is essential for activity because fatty acids are bound in thioester linkage to the sulfhydryl of the prosthetic group.

Its subcellular location is the cytoplasm. It participates in lipid metabolism; fatty acid biosynthesis. Its function is as follows. Carrier of the growing fatty acid chain in fatty acid biosynthesis. In Alcanivorax borkumensis (strain ATCC 700651 / DSM 11573 / NCIMB 13689 / SK2), this protein is Acyl carrier protein.